We begin with the raw amino-acid sequence, 189 residues long: ATP synthase subunit b (189 aa).

Residues 35-54 form a helical membrane-spanning segment; it reads LLAQMFNFLVLLILLRAVAY.

The protein belongs to the ATPase B chain family. In terms of assembly, F-type ATPases have 2 components, F(1) - the catalytic core - and F(0) - the membrane proton channel. F(1) has five subunits: alpha(3), beta(3), gamma(1), delta(1), epsilon(1). F(0) has three main subunits: a(1), b(2) and c(10-14). The alpha and beta chains form an alternating ring which encloses part of the gamma chain. F(1) is attached to F(0) by a central stalk formed by the gamma and epsilon chains, while a peripheral stalk is formed by the delta and b chains.

It is found in the cell membrane. Functionally, f(1)F(0) ATP synthase produces ATP from ADP in the presence of a proton or sodium gradient. F-type ATPases consist of two structural domains, F(1) containing the extramembraneous catalytic core and F(0) containing the membrane proton channel, linked together by a central stalk and a peripheral stalk. During catalysis, ATP synthesis in the catalytic domain of F(1) is coupled via a rotary mechanism of the central stalk subunits to proton translocation. In terms of biological role, component of the F(0) channel, it forms part of the peripheral stalk, linking F(1) to F(0). The chain is ATP synthase subunit b from Desulforamulus reducens (strain ATCC BAA-1160 / DSM 100696 / MI-1) (Desulfotomaculum reducens).